Reading from the N-terminus, the 1297-residue chain is Cingulin-like protein 1 (1297 aa).

Residues 1–550 are head; the sequence is MELYFGEYQH…ELTQQTNEET (550 aa). A ZIM motif is present at residues 37–51; the sequence is AGSYGVSIRVQGIDG. 3 positions are modified to phosphoserine: Ser113, Ser203, and Ser257. Disordered stretches follow at residues 161-208, 245-306, 364-396, and 428-467; these read NEVN…TSED, GVGE…TPTS, KPGL…AFPF, and QRSV…DGKV. Residues 197–206 show a composition bias toward polar residues; the sequence is YGSQPNSPTS. Over residues 268–283 the composition is skewed to basic and acidic residues; sequence ETKKNRPDVLPFRRQD. Phosphoserine occurs at positions 284, 298, and 299. Residues 297 to 306 are compositionally biased toward low complexity; that stretch reads SSSSSTTPTS. Residues 367–378 are compositionally biased toward basic residues; it reads LQRRGRSGKRNR. A compositionally biased stretch (basic and acidic residues) spans 379-389; the sequence is INPDDRKRSRS. Residues Ser389 and Ser392 each carry the phosphoserine modification. The residue at position 482 (Ser482) is a Phosphoserine. The segment at 586–608 is disordered; the sequence is SRAAGSAQGSNQAPNSPSEGNSL. Positions 592-608 are enriched in polar residues; sequence AQGSNQAPNSPSEGNSL. A coiled-coil region spans residues 604 to 1251; that stretch reads EGNSLLDQKN…LQGQLNSLKK (648 aa). A phosphoserine mark is found at Ser678 and Ser704. The tract at residues 1259–1297 is tail; the sequence is SSKVLDDSDDDDLSSDAGSLYEAPLSYAFPKDSTIASQI.

Belongs to the cingulin family. As to quaternary structure, homodimer or oligomer. Interacts with CD2AP and SH3BP1; probably part of a complex at cell junctions. Widely expressed. Highly expressed in the kidney and lung.

Its subcellular location is the cell junction. It is found in the tight junction. May be involved in anchoring the apical junctional complex, especially tight junctions, to actin-based cytoskeletons. The sequence is that of Cingulin-like protein 1 from Mus musculus (Mouse).